The following is a 301-amino-acid chain: Sulfate adenylyltransferase subunit 2 (301 aa).

The protein belongs to the PAPS reductase family. CysD subfamily. Heterodimer composed of CysD, the smaller subunit, and CysN.

The catalysed reaction is sulfate + ATP + H(+) = adenosine 5'-phosphosulfate + diphosphate. It participates in sulfur metabolism; hydrogen sulfide biosynthesis; sulfite from sulfate: step 1/3. With CysN forms the ATP sulfurylase (ATPS) that catalyzes the adenylation of sulfate producing adenosine 5'-phosphosulfate (APS) and diphosphate, the first enzymatic step in sulfur assimilation pathway. APS synthesis involves the formation of a high-energy phosphoric-sulfuric acid anhydride bond driven by GTP hydrolysis by CysN coupled to ATP hydrolysis by CysD. This chain is Sulfate adenylyltransferase subunit 2, found in Trichlorobacter lovleyi (strain ATCC BAA-1151 / DSM 17278 / SZ) (Geobacter lovleyi).